The chain runs to 315 residues: Olfactory receptor 8J2 (315 aa).

At 1 to 24 the chain is on the extracellular side; it reads MASGNLTWVTEFILVGVSDDPELQ. A glycan (N-linked (GlcNAc...) asparagine) is linked at Asn-5. The helical transmembrane segment at 25–45 threads the bilayer; it reads IPLFLVFLVLYLLTVAGNLGI. Residues 46–57 lie on the Cytoplasmic side of the membrane; the sequence is ITLTSVDPQLQT. A helical membrane pass occupies residues 58–78; it reads PMYFFLRHLAIINLCNSTVVA. Over 79-97 the chain is Extracellular; sequence PKMLVNFLVTKKTISYYGC. Cysteines 97 and 179 form a disulfide. A helical transmembrane segment spans residues 98–118; that stretch reads AAQLGGFLVFIVAEIFTLAAM. Topologically, residues 119 to 143 are cytoplasmic; that stretch reads AYDRYVAIWSPLLYAVVVSPKVCRL. A helical membrane pass occupies residues 144–164; the sequence is LVSLTYLQSLITALTVSSCVF. The Extracellular segment spans residues 165–205; sequence SVSYCSSNIINHFYCDDVPLLALSCSDTYIPETAVFIFSGT. The helical transmembrane segment at 206–226 threads the bilayer; sequence NLLFSMIVVLISYFNIVITIL. At 227 to 239 the chain is on the cytoplasmic side; it reads RIRSSEGRQKAFS. Residues 240-260 form a helical membrane-spanning segment; it reads TCASHMIAVVVFYGTLLFMYL. Over 261–271 the chain is Extracellular; that stretch reads QPRSNHSLDTD. N-linked (GlcNAc...) asparagine glycosylation is present at Asn-265. The chain crosses the membrane as a helical span at residues 272–292; that stretch reads KMASVFYTLVIPVLNPLIYSL. At 293-315 the chain is on the cytoplasmic side; sequence RNKNVKDALKRFLDNPCRSLKLM.

It belongs to the G-protein coupled receptor 1 family.

The protein localises to the membrane. In terms of biological role, odorant receptor. The chain is Olfactory receptor 8J2 (OR8J2) from Homo sapiens (Human).